We begin with the raw amino-acid sequence, 50 residues long: Sproutin (50 aa).

The residue at position 8 (serine 8) is a Phosphoserine; by PKC.

As to expression, brain.

Functionally, neurite outgrowth factor. The polypeptide is Sproutin (Rattus norvegicus (Rat)).